A 723-amino-acid chain; its full sequence is MAKTPIPFTTLNDLPDVILSNIIAAVSDTRSRNATALVCHKWLVLERSTRTSLTLRGNIRDLFMLPTCFRSITYLDLSLISPWGHPLLASRATDAPDNDSALIAHLLRHTFPSVTSLTLYARDPNTIQFLPAQWAHTLKHIKLVRWHQRAQLASGDELNLLFIGTPQITSLDLSNFYCWTDDVPPALQSNPNVACNLTRFNLLNASFPEGFKTDEIKVITKCCPNLKEFKVACMFDPRYIGFIGDEALVCLATNCPKLSVLHLADTSVLSNCRGDPNDEGFTVEDAQFSVSTLIEVFSGLSLLEELVFDVCNNVRDSGPALEILKTKCPKLRSLKLGQFHGISMPIESKLDGVALCQGLLSLSIRSVGDLDDMGLIGIGRGCSRLTKFEIECCKKITMRGMRTLASLLRKSLVDVTISCCKNLGASSSLKALEPIQDRIQRLHIDCVWDTVEEFENLDGVEYGFDLNEASGGEASSNPAGFGDTFGSMDDDLMNNRNKRCKYSYDLNSVYVENNGHGNGFCGRTWDRLQYLSLWIGVGELLTPLAAAGLQDCPKLEEIKIKVEGDCRLWSKPSERAFGLSTLIQYPKLVKMHLDCGDIIGYAHTAPSGQMDLSLWERFYLMGIRHLNLRELDYWPPQDRDVNQRSLSLPAAGLLQECVTLRKLFIHGTAHEHFMMFLLRIPNLRDVQLREDYYPAPENDMSTEMRADSLSRFEVALNRRQICD.

The 54-residue stretch at 2 to 55 (AKTPIPFTTLNDLPDVILSNIIAAVSDTRSRNATALVCHKWLVLERSTRTSLTL) folds into the F-box domain.

As to quaternary structure, part of a putative SCF (SKP1/Cullin/F-box) ubiquitin ligase complex. Interacts with KAI2IA in the presence of (-)-germacrene D. Mainly expressed in fully expanded leaves, lateral roots, axillary and shoot apex, and, to a lower extent, in internodes and nodes.

It is found in the nucleus. It localises to the cytoplasm. Component of SCF(ASK-cullin-F-box) E3 ubiquitin ligase complexes, which may mediate the ubiquitination and subsequent proteasomal degradation of target proteins. Is necessary for responses to strigolactones and may be involved in the ubiquitin-mediated degradation of specific proteins that activate axillary growth. Targets probably SMAX1A to degradation upon the formation of an E3 SCF ubiquitin ligase complex (ASK-cullin-F-box) containing MAX2B and KAI2IA in response to (-)-germacrene D in the stigma. This is F-box protein MAX2 homolog B from Petunia hybrida (Petunia).